A 166-amino-acid polypeptide reads, in one-letter code: Large ribosomal subunit protein uL10 (166 aa).

It belongs to the universal ribosomal protein uL10 family. As to quaternary structure, part of the ribosomal stalk of the 50S ribosomal subunit. The N-terminus interacts with L11 and the large rRNA to form the base of the stalk. The C-terminus forms an elongated spine to which L12 dimers bind in a sequential fashion forming a multimeric L10(L12)X complex.

Its function is as follows. Forms part of the ribosomal stalk, playing a central role in the interaction of the ribosome with GTP-bound translation factors. The protein is Large ribosomal subunit protein uL10 of Azotobacter vinelandii (strain DJ / ATCC BAA-1303).